We begin with the raw amino-acid sequence, 437 residues long: Transmembrane protein with metallophosphoesterase domain (437 aa).

5 consecutive transmembrane segments (helical) span residues 7–27, 41–61, 87–107, 116–136, and 164–184; these read LSAE…MLIS, ALLF…LGSL, IIVL…FFLV, LLSF…FVFG, and VLAL…AAQP. A divalent metal cation-binding residues include D211, H213, D243, N274, H376, and H378.

It belongs to the metallophosphoesterase superfamily. LOC643853 family. Requires a divalent metal cation as cofactor.

It localises to the membrane. The sequence is that of Transmembrane protein with metallophosphoesterase domain (tmppe) from Danio rerio (Zebrafish).